We begin with the raw amino-acid sequence, 1890 residues long: Callose synthase 9 (1890 aa).

The Cytoplasmic segment spans residues 1–489; sequence MSRAESSWER…EHRTFLHLYH (489 aa). The chain crosses the membrane as a helical span at residues 490 to 510; sequence SFHRLWIFLAMMFQALAIIAF. The Extracellular portion of the chain corresponds to 511-523; sequence NKDDLTSRKTLLQ. A helical transmembrane segment spans residues 524–544; it reads ILSLGPTFVVMKFSESVLEVI. Residues 545–560 lie on the Cytoplasmic side of the membrane; the sequence is MMYGAYSTTRRLAVSR. The helical transmembrane segment at 561–581 threads the bilayer; the sequence is IFLRFIWFGLASVFISFLYVK. Residues 582–591 lie on the Extracellular side of the membrane; the sequence is SLKAPNSDSP. The chain crosses the membrane as a helical span at residues 592 to 612; sequence IVQLYLIVIAIYGGVQFFFSI. Over 613-658 the chain is Cytoplasmic; sequence LMRIPTCHNIANKCDRWPVIRFFKWMRQERHYVGRGMYERTSDFIK. A helical membrane pass occupies residues 659–679; it reads YLLFWLVVLSAKFSFAYFLQI. The Extracellular portion of the chain corresponds to 680 to 722; it reads KPLVGPTRMIVKQNNIPYSWHDFVSRKNYNALTVASLWAPVVA. Residues 723–743 traverse the membrane as a helical segment; it reads IYLLDIHIFYTIFSAFLGFLL. Over 744 to 1457 the chain is Cytoplasmic; the sequence is GARDRLGEIR…QLLDFFRMMS (714 aa). Residues 1458-1478 form a helical membrane-spanning segment; sequence FFFTTVGFYLCTMLTVLTVYI. Topologically, residues 1479-1512 are extracellular; that stretch reads FLYGRAYLALSGVGATIRERAILLDDTALSAALN. Residues 1513–1533 traverse the membrane as a helical segment; the sequence is AQFLFQIGVFTAVPMVLGFIL. Topologically, residues 1534 to 1539 are cytoplasmic; it reads EQGFLQ. The helical transmembrane segment at 1540–1560 threads the bilayer; the sequence is AIVSFITMQFQLCTVFFTFSL. The Extracellular portion of the chain corresponds to 1561–1609; it reads GTRTHYFGRTILHGGARYQATGRGFVVKHIKFSENYRLYSRSHFVKAME. 2 consecutive transmembrane segments (helical) span residues 1610–1630 and 1631–1651; these read VILLLVVYLAYGNDEAGAVSY and ILLTVSSWFLAVSWLFAPYLF. Residues 1652–1703 lie on the Extracellular side of the membrane; sequence NPAGFEWQKVVEDFKEWTNWLFYRGGIGVKGAESWEAWWEEELSHIRTLSGR. A helical transmembrane segment spans residues 1704 to 1724; that stretch reads IMETILSLRFFIFQYGIVYKL. The Cytoplasmic portion of the chain corresponds to 1725-1732; the sequence is KLQGSDTS. A helical membrane pass occupies residues 1733-1753; the sequence is FAVYGWSWVAFAMIIVLFKVF. Residues 1754–1768 are Extracellular-facing; that stretch reads TFSQKISVNFQLLLR. A helical membrane pass occupies residues 1769–1789; it reads FIQGLSLLMALAGIIVAVVLT. The Cytoplasmic segment spans residues 1790–1795; that stretch reads PLSVTD. A helical transmembrane segment spans residues 1796–1816; it reads IFACVLAFIPTGWGILSIACA. Over 1817-1838 the chain is Extracellular; that stretch reads WKPVLKRMGMWKSIRSLARLYD. The helical transmembrane segment at 1839-1859 threads the bilayer; sequence ALMGMLIFLPVALCSWFPFVS. Residues 1860 to 1890 are Cytoplasmic-facing; it reads TFQTRMMFNQAFSRGLEISLILAGDNPNSGL.

The protein belongs to the glycosyltransferase 48 family.

The protein localises to the cell membrane. It catalyses the reaction [(1-&gt;3)-beta-D-glucosyl](n) + UDP-alpha-D-glucose = [(1-&gt;3)-beta-D-glucosyl](n+1) + UDP + H(+). Functionally, involved in sporophytic and gametophytic development. Required for normal plant development. During pollen formation, required for the entry of microspores into mitosis and microspore symmetric division. May be required for correct temporal and spatial control of callose deposition during pollen mitosis. During plant growth and development, callose is found as a transitory component of the cell plate in dividing cells, is a major component of pollen mother cell walls and pollen tubes, and is found as a structural component of plasmodesmatal canals. This Arabidopsis thaliana (Mouse-ear cress) protein is Callose synthase 9 (CALS9).